Reading from the N-terminus, the 599-residue chain is NADH-quinone oxidoreductase subunit C/D (599 aa).

Residues 1–189 form an NADH dehydrogenase I subunit C region; the sequence is MTDLTTHDLA…DPFVLTKQKE (189 aa). Residues 213–599 are NADH dehydrogenase I subunit D; that stretch reads DFMFLNLGPN…IDFVMSDVDR (387 aa).

In the N-terminal section; belongs to the complex I 30 kDa subunit family. This sequence in the C-terminal section; belongs to the complex I 49 kDa subunit family. As to quaternary structure, NDH-1 is composed of 13 different subunits. Subunits NuoB, CD, E, F, and G constitute the peripheral sector of the complex.

Its subcellular location is the cell inner membrane. The enzyme catalyses a quinone + NADH + 5 H(+)(in) = a quinol + NAD(+) + 4 H(+)(out). Its function is as follows. NDH-1 shuttles electrons from NADH, via FMN and iron-sulfur (Fe-S) centers, to quinones in the respiratory chain. The immediate electron acceptor for the enzyme in this species is believed to be ubiquinone. Couples the redox reaction to proton translocation (for every two electrons transferred, four hydrogen ions are translocated across the cytoplasmic membrane), and thus conserves the redox energy in a proton gradient. The chain is NADH-quinone oxidoreductase subunit C/D from Pectobacterium carotovorum subsp. carotovorum (strain PC1).